The following is a 170-amino-acid chain: MAQTKSSYDYEDLLACARGELFGPGNAQLPAPPMLMFDRITEVSAEGGEFGKGFIRAELDIKPDLWFFPCHFIGDPVMPGCLGLDALWQMTGFFLGWLGEPGKGRAISTGEVKFSGMVTPAVKTVEYGVDLKRVMRGRLVLGIGDGWLKADGETIYRASDLRVGLFKQES.

The active site involves His-71.

The protein belongs to the thioester dehydratase family. FabA subfamily. Homodimer.

The protein resides in the cytoplasm. The catalysed reaction is a (3R)-hydroxyacyl-[ACP] = a (2E)-enoyl-[ACP] + H2O. It catalyses the reaction (3R)-hydroxydecanoyl-[ACP] = (2E)-decenoyl-[ACP] + H2O. It carries out the reaction (2E)-decenoyl-[ACP] = (3Z)-decenoyl-[ACP]. The protein operates within lipid metabolism; fatty acid biosynthesis. Functionally, necessary for the introduction of cis unsaturation into fatty acids. Catalyzes the dehydration of (3R)-3-hydroxydecanoyl-ACP to E-(2)-decenoyl-ACP and then its isomerization to Z-(3)-decenoyl-ACP. Can catalyze the dehydratase reaction for beta-hydroxyacyl-ACPs with saturated chain lengths up to 16:0, being most active on intermediate chain length. This chain is 3-hydroxydecanoyl-[acyl-carrier-protein] dehydratase, found in Chelativorans sp. (strain BNC1).